Consider the following 689-residue polypeptide: Protein asunder (689 aa).

The stretch at 521-550 (NGARLKLSKAKDQYRLLYRELEQLIQLNAT) forms a coiled coil. Disordered stretches follow at residues 592–619 (PERL…SKRR) and 665–689 (GTKD…SVRS). Low complexity predominate over residues 599-614 (SSVGASGSSSSNSLLK). The Nuclear localization signal (NLS) signature appears at 613–619 (LKASKRR).

This sequence belongs to the Integrator subunit 13 family. Belongs to the multiprotein complex Integrator, at least composed of IntS1, IntS2, IntS3, IntS4, omd/IntS5, IntS6, defl/IntS7, IntS8, IntS9, IntS10, IntS11, IntS12, asun/IntS13, IntS14 and IntS15. The core complex associates with protein phosphatase 2A subunits mts/PP2A and Pp2A-29B, to form the Integrator-PP2A (INTAC) complex. Phosphorylated. As to expression, expressed in nurse cells at stages 9-10 of oogenesis and exported to the oocyte. Also expressed in the follicle cells surrounding the oocyte.

It is found in the nucleus. The protein localises to the cytoplasm. The protein resides in the perinuclear region. Its function is as follows. Component of the integrator complex, a multiprotein complex that terminates RNA polymerase II (Pol II) transcription in the promoter-proximal region of genes. The integrator complex provides a quality checkpoint during transcription elongation by driving premature transcription termination of transcripts that are unfavorably configured for transcriptional elongation: the complex terminates transcription by (1) catalyzing dephosphorylation of the C-terminal domain (CTD) of Pol II subunit Polr2A/Rbp1 and Spt5, and (2) degrading the exiting nascent RNA transcript via endonuclease activity. The integrator complex is also involved in the 3'-end processing of the U7 snRNA, and also the spliceosomal snRNAs U1, U2, U4 and U5. Plays a role as a regulator of spermatogenesis. Crucial regulator of the mitotic cell cycle and development. Required for the correct dynein-dynactin perinuclear localization important for nucleus-centrosome coupling that occur upon meiotic progression of primary spermatocytes. Plays a role in sperm motility and fertility. May have a role in the PNG/PLU/GNU pathway. The protein is Protein asunder of Drosophila melanogaster (Fruit fly).